The sequence spans 233 residues: Large ribosomal subunit protein uL1 (233 aa).

This sequence belongs to the universal ribosomal protein uL1 family. Part of the 50S ribosomal subunit.

Binds directly to 23S rRNA. The L1 stalk is quite mobile in the ribosome, and is involved in E site tRNA release. Functionally, protein L1 is also a translational repressor protein, it controls the translation of the L11 operon by binding to its mRNA. The chain is Large ribosomal subunit protein uL1 from Thermotoga petrophila (strain ATCC BAA-488 / DSM 13995 / JCM 10881 / RKU-1).